Here is a 171-residue protein sequence, read N- to C-terminus: uncharacterized protein (171 aa).

It to M.jannaschii MJ0417.

This is an uncharacterized protein from Methanocaldococcus jannaschii (strain ATCC 43067 / DSM 2661 / JAL-1 / JCM 10045 / NBRC 100440) (Methanococcus jannaschii).